A 256-amino-acid chain; its full sequence is tRNA (guanine-N(7)-)-methyltransferase (256 aa).

S-adenosyl-L-methionine-binding residues include glutamate 85, glutamate 110, aspartate 137, and aspartate 159. Residue aspartate 159 is part of the active site. Substrate-binding residues include lysine 163 and aspartate 195.

It belongs to the class I-like SAM-binding methyltransferase superfamily. TrmB family.

The enzyme catalyses guanosine(46) in tRNA + S-adenosyl-L-methionine = N(7)-methylguanosine(46) in tRNA + S-adenosyl-L-homocysteine. The protein operates within tRNA modification; N(7)-methylguanine-tRNA biosynthesis. Catalyzes the formation of N(7)-methylguanine at position 46 (m7G46) in tRNA. This Rhodopseudomonas palustris (strain BisB5) protein is tRNA (guanine-N(7)-)-methyltransferase.